Here is a 296-residue protein sequence, read N- to C-terminus: Putative fatty acid elongase DDB_G0272012 (296 aa).

The next 7 helical transmembrane spans lie at F51 to L71, V83 to L103, W134 to L154, L159 to Y179, L184 to F204, M220 to I240, and A253 to V273. Over residues S277–T290 the composition is skewed to low complexity. A disordered region spans residues S277–D296.

It belongs to the ELO family.

It is found in the membrane. The enzyme catalyses a very-long-chain acyl-CoA + malonyl-CoA + H(+) = a very-long-chain 3-oxoacyl-CoA + CO2 + CoA. Its function is as follows. Could be implicated in synthesis of very long chain fatty acids. This chain is Putative fatty acid elongase DDB_G0272012, found in Dictyostelium discoideum (Social amoeba).